The sequence spans 487 residues: UDP-N-acetylmuramate--L-alanine ligase (487 aa).

An ATP-binding site is contributed by 126–132; it reads GTHGKTT.

The protein belongs to the MurCDEF family.

It is found in the cytoplasm. The catalysed reaction is UDP-N-acetyl-alpha-D-muramate + L-alanine + ATP = UDP-N-acetyl-alpha-D-muramoyl-L-alanine + ADP + phosphate + H(+). The protein operates within cell wall biogenesis; peptidoglycan biosynthesis. Cell wall formation. The chain is UDP-N-acetylmuramate--L-alanine ligase from Psychromonas ingrahamii (strain DSM 17664 / CCUG 51855 / 37).